The sequence spans 311 residues: Catechol 1,2-dioxygenase (311 aa).

Position 164 (tyrosine 164) interacts with catechol. Tyrosine 164, tyrosine 200, histidine 224, and histidine 226 together coordinate Fe cation. Position 224 to 226 (224 to 226) interacts with catechol; sequence HIH.

This sequence belongs to the intradiol ring-cleavage dioxygenase family. Homodimer. The cofactor is Fe(3+).

It carries out the reaction catechol + O2 = cis,cis-muconate + 2 H(+). It functions in the pathway aromatic compound metabolism; beta-ketoadipate pathway; 5-oxo-4,5-dihydro-2-furylacetate from catechol: step 1/3. The polypeptide is Catechol 1,2-dioxygenase (Acinetobacter baylyi (strain ATCC 33305 / BD413 / ADP1)).